A 75-amino-acid chain; its full sequence is UPF0352 protein YejL (75 aa).

It belongs to the UPF0352 family.

The protein is UPF0352 protein YejL of Salmonella agona (strain SL483).